We begin with the raw amino-acid sequence, 316 residues long: Protoheme IX farnesyltransferase (316 aa).

A run of 9 helical transmembrane segments spans residues Val32–His52, Pro53–Leu73, Ile93–Phe113, Val116–Phe136, Asn152–Thr172, Thr180–Phe200, Val221–Ser241, Leu252–Met271, and Ile289–Val309.

It belongs to the UbiA prenyltransferase family. Protoheme IX farnesyltransferase subfamily.

Its subcellular location is the cell inner membrane. The catalysed reaction is heme b + (2E,6E)-farnesyl diphosphate + H2O = Fe(II)-heme o + diphosphate. It participates in porphyrin-containing compound metabolism; heme O biosynthesis; heme O from protoheme: step 1/1. Functionally, converts heme B (protoheme IX) to heme O by substitution of the vinyl group on carbon 2 of heme B porphyrin ring with a hydroxyethyl farnesyl side group. This chain is Protoheme IX farnesyltransferase, found in Rhizobium johnstonii (strain DSM 114642 / LMG 32736 / 3841) (Rhizobium leguminosarum bv. viciae).